A 151-amino-acid polypeptide reads, in one-letter code: SsrA-binding protein (151 aa).

It belongs to the SmpB family.

The protein resides in the cytoplasm. Functionally, required for rescue of stalled ribosomes mediated by trans-translation. Binds to transfer-messenger RNA (tmRNA), required for stable association of tmRNA with ribosomes. tmRNA and SmpB together mimic tRNA shape, replacing the anticodon stem-loop with SmpB. tmRNA is encoded by the ssrA gene; the 2 termini fold to resemble tRNA(Ala) and it encodes a 'tag peptide', a short internal open reading frame. During trans-translation Ala-aminoacylated tmRNA acts like a tRNA, entering the A-site of stalled ribosomes, displacing the stalled mRNA. The ribosome then switches to translate the ORF on the tmRNA; the nascent peptide is terminated with the 'tag peptide' encoded by the tmRNA and targeted for degradation. The ribosome is freed to recommence translation, which seems to be the essential function of trans-translation. In Wolinella succinogenes (strain ATCC 29543 / DSM 1740 / CCUG 13145 / JCM 31913 / LMG 7466 / NCTC 11488 / FDC 602W) (Vibrio succinogenes), this protein is SsrA-binding protein.